The chain runs to 337 residues: DNA-directed RNA polymerase subunit alpha (337 aa).

An alpha N-terminal domain (alpha-NTD) region spans residues 1 to 233 (MVREEVAVST…DLFIPFLHAE (233 aa)). Residues 266-337 (GIALKCIFID…FTIDLPKNKF (72 aa)) form an alpha C-terminal domain (alpha-CTD) region.

This sequence belongs to the RNA polymerase alpha chain family. In plastids the minimal PEP RNA polymerase catalytic core is composed of four subunits: alpha, beta, beta', and beta''. When a (nuclear-encoded) sigma factor is associated with the core the holoenzyme is formed, which can initiate transcription.

It is found in the plastid. It localises to the chloroplast. The enzyme catalyses RNA(n) + a ribonucleoside 5'-triphosphate = RNA(n+1) + diphosphate. DNA-dependent RNA polymerase catalyzes the transcription of DNA into RNA using the four ribonucleoside triphosphates as substrates. The protein is DNA-directed RNA polymerase subunit alpha of Liriodendron tulipifera (Tuliptree).